Consider the following 1650-residue polypeptide: Phosphatidylinositol 3,4,5-trisphosphate-dependent Rac exchanger 1 protein (1650 aa).

Positions 1–19 are enriched in gly residues; sequence MEAPGSGGGDGGGDPGGDG. The segment at 1–33 is disordered; that stretch reads MEAPGSGGGDGGGDPGGDGAHPDARGPVSGPCA. Residues 44-235 form the DH domain; that stretch reads LRLCVLNEIL…KTVCSNINET (192 aa). Residues 266-387 enclose the PH domain; that stretch reads ELLLQGNLLK…WLDALIRERE (122 aa). A Phosphoserine modification is found at Ser314. 2 consecutive DEP domains span residues 416–491 and 518–592; these read MSKK…RFRY and SLYA…RFHA. In terms of domain architecture, PDZ spans 620 to 698; the sequence is RLLIPPQEDD…SRRPLRLLVA (79 aa). Residues 793–813 are disordered; that stretch reads ARASQGAPDEDPQEDDQPDSA. Over residues 800-810 the composition is skewed to acidic residues; the sequence is PDEDPQEDDQP. Ser991 is modified (phosphoserine). 2 disordered regions span residues 1022–1047 and 1099–1129; these read SPAV…GAPS and PTSA…EVDR. The span at 1030-1047 shows a compositional bias: polar residues; sequence QGQGLNDSSYGSASGAPS. A compositionally biased stretch (low complexity) spans 1109 to 1122; the sequence is PSLVEETSSSPPVS. Residues Ser1186 and Ser1191 each carry the phosphoserine modification.

Interacts preferentially with RAC2. Interacts with RAC1. Interacts with AUTS2.

Its subcellular location is the cytoplasm. It is found in the cytosol. It localises to the cell membrane. In terms of biological role, functions as a RAC guanine nucleotide exchange factor (GEF), which activates the Rac proteins by exchanging bound GDP for free GTP. Its activity is synergistically activated by phosphatidylinositol 3,4,5-trisphosphate and the beta gamma subunits of heterotrimeric G protein. May function downstream of heterotrimeric G proteins in neutrophils. The protein is Phosphatidylinositol 3,4,5-trisphosphate-dependent Rac exchanger 1 protein (Prex1) of Mus musculus (Mouse).